Reading from the N-terminus, the 347-residue chain is GMP reductase (347 aa).

108-131 is an NADP(+) binding site; it reads ADFQKTKDIMALTDDLIFICVDIA. Positions 181 and 183 each coordinate K(+). The active-site Thioimidate intermediate is the Cys-186. Residue 216–239 coordinates NADP(+); it reads IIGDGGCSCAGDVSKAFGGGADFV.

This sequence belongs to the IMPDH/GMPR family. GuaC type 1 subfamily. Homotetramer.

The enzyme catalyses IMP + NH4(+) + NADP(+) = GMP + NADPH + 2 H(+). Catalyzes the irreversible NADPH-dependent deamination of GMP to IMP. It functions in the conversion of nucleobase, nucleoside and nucleotide derivatives of G to A nucleotides, and in maintaining the intracellular balance of A and G nucleotides. The protein is GMP reductase of Aliivibrio salmonicida (strain LFI1238) (Vibrio salmonicida (strain LFI1238)).